Here is a 327-residue protein sequence, read N- to C-terminus: Phenylalanine--tRNA ligase alpha subunit (327 aa).

Glutamate 252 contacts Mg(2+).

Belongs to the class-II aminoacyl-tRNA synthetase family. Phe-tRNA synthetase alpha subunit type 1 subfamily. Tetramer of two alpha and two beta subunits. It depends on Mg(2+) as a cofactor.

The protein resides in the cytoplasm. The enzyme catalyses tRNA(Phe) + L-phenylalanine + ATP = L-phenylalanyl-tRNA(Phe) + AMP + diphosphate + H(+). In Vibrio campbellii (strain ATCC BAA-1116), this protein is Phenylalanine--tRNA ligase alpha subunit.